Consider the following 143-residue polypeptide: Translation initiation factor 2 subunit beta (143 aa).

Belongs to the eIF-2-beta/eIF-5 family. Heterotrimer composed of an alpha, a beta and a gamma chain.

Functionally, eIF-2 functions in the early steps of protein synthesis by forming a ternary complex with GTP and initiator tRNA. The polypeptide is Translation initiation factor 2 subunit beta (eif2b) (Methanocaldococcus jannaschii (strain ATCC 43067 / DSM 2661 / JAL-1 / JCM 10045 / NBRC 100440) (Methanococcus jannaschii)).